Consider the following 400-residue polypeptide: PHD finger protein 24 (400 aa).

Residue glycine 2 is the site of N-myristoyl glycine attachment. Residues arginine 29–glycine 38 show a composition bias toward basic and acidic residues. Residues arginine 29–alanine 65 form a disordered region. Omega-N-methylarginine is present on arginine 36. Position 43 is a phosphoserine (serine 43). Threonine 47 is modified (phosphothreonine). Serine 51 is modified (phosphoserine). A PHD-type zinc finger spans residues asparagine 129–asparagine 190. Residue arginine 307 is modified to Omega-N-methylarginine.

The protein is PHD finger protein 24 of Mus musculus (Mouse).